Here is a 172-residue protein sequence, read N- to C-terminus: Large ribosomal subunit protein uL10 (172 aa).

Belongs to the universal ribosomal protein uL10 family. In terms of assembly, part of the ribosomal stalk of the 50S ribosomal subunit. The N-terminus interacts with L11 and the large rRNA to form the base of the stalk. The C-terminus forms an elongated spine to which L12 dimers bind in a sequential fashion forming a multimeric L10(L12)X complex.

Functionally, forms part of the ribosomal stalk, playing a central role in the interaction of the ribosome with GTP-bound translation factors. The chain is Large ribosomal subunit protein uL10 (rplJ) from Brucella abortus biovar 1 (strain 9-941).